Consider the following 193-residue polypeptide: Ion-translocating oxidoreductase complex subunit A (193 aa).

6 helical membrane-spanning segments follow: residues 4 to 24 (FLLL…QFLG), 39 to 59 (IGMS…SYLV), 63 to 83 (ILLP…VIAV), 102 to 122 (LLGI…VALL), 134 to 154 (VIYG…FAAM), and 171 to 191 (SISM…TGLV).

Belongs to the NqrDE/RnfAE family. As to quaternary structure, the complex is composed of six subunits: RnfA, RnfB, RnfC, RnfD, RnfE and RnfG.

It is found in the cell inner membrane. Part of a membrane-bound complex that couples electron transfer with translocation of ions across the membrane. The polypeptide is Ion-translocating oxidoreductase complex subunit A (Pseudoalteromonas atlantica (strain T6c / ATCC BAA-1087)).